The chain runs to 418 residues: Gamma-glutamyl phosphate reductase (418 aa).

The protein belongs to the gamma-glutamyl phosphate reductase family.

The protein localises to the cytoplasm. The catalysed reaction is L-glutamate 5-semialdehyde + phosphate + NADP(+) = L-glutamyl 5-phosphate + NADPH + H(+). The protein operates within amino-acid biosynthesis; L-proline biosynthesis; L-glutamate 5-semialdehyde from L-glutamate: step 2/2. Its function is as follows. Catalyzes the NADPH-dependent reduction of L-glutamate 5-phosphate into L-glutamate 5-semialdehyde and phosphate. The product spontaneously undergoes cyclization to form 1-pyrroline-5-carboxylate. The sequence is that of Gamma-glutamyl phosphate reductase from Colwellia psychrerythraea (strain 34H / ATCC BAA-681) (Vibrio psychroerythus).